We begin with the raw amino-acid sequence, 119 residues long: Venom allergen 2 (119 aa).

This sequence belongs to the ant venom allergen 2/4 family. Homodimer; disulfide-linked. In terms of tissue distribution, expressed by the venom gland.

Its subcellular location is the secreted. This Solenopsis richteri (Black imported fire ant) protein is Venom allergen 2.